Consider the following 756-residue polypeptide: Ribonucleoside-diphosphate reductase subunit alpha (756 aa).

The region spanning 5–95 (LMVTKRDGTQ…IFHLRKKAYG (91 aa)) is the ATP-cone domain. Residues Lys-9, 15-21 (EQINLDK), Thr-55, and Lys-91 each bind ATP. A GDP-binding site is contributed by Thr-209. A disulfide bridge links Cys-225 with Cys-462. Residues 232 to 234 (DSL), Arg-262, and Arg-269 each bind dTTP. Asn-437 contributes to the GDP binding site. The active-site Proton acceptor is Asn-437. Cys-439 functions as the Cysteine radical intermediate in the catalytic mechanism. Residues Glu-441 and 623 to 625 (ETS) each bind GDP. The active-site Proton acceptor is Glu-441.

The protein belongs to the ribonucleoside diphosphate reductase large chain family. Tetramer of two alpha and two beta subunits.

It catalyses the reaction a 2'-deoxyribonucleoside 5'-diphosphate + [thioredoxin]-disulfide + H2O = a ribonucleoside 5'-diphosphate + [thioredoxin]-dithiol. Its activity is regulated as follows. Under complex allosteric control mediated by deoxynucleoside triphosphates and ATP binding to separate specificity and activation sites on the alpha subunit. The type of nucleotide bound at the specificity site determines substrate preference. It seems probable that ATP makes the enzyme reduce CDP and UDP, dGTP favors ADP reduction and dTTP favors GDP reduction. Stimulated by ATP and inhibited by dATP binding to the activity site. In terms of biological role, provides the precursors necessary for DNA synthesis. Catalyzes the biosynthesis of deoxyribonucleotides from the corresponding ribonucleotides. The sequence is that of Ribonucleoside-diphosphate reductase subunit alpha (nrdA) from Haemophilus influenzae (strain ATCC 51907 / DSM 11121 / KW20 / Rd).